Consider the following 259-residue polypeptide: Phosphate import ATP-binding protein PstB (259 aa).

Positions 5-248 constitute an ABC transporter domain; the sequence is IEVNDLNVYY…NIIFSNPSAQ (244 aa). ATP is bound at residue 37-44; the sequence is GPSGCGKS.

It belongs to the ABC transporter superfamily. Phosphate importer (TC 3.A.1.7) family. In terms of assembly, the complex is composed of two ATP-binding proteins (PstB), two transmembrane proteins (PstC and PstA) and a solute-binding protein (PstS).

The protein localises to the cell membrane. It catalyses the reaction phosphate(out) + ATP + H2O = ADP + 2 phosphate(in) + H(+). In terms of biological role, part of the ABC transporter complex PstSACB involved in phosphate import. Responsible for energy coupling to the transport system. The protein is Phosphate import ATP-binding protein PstB of Leifsonia xyli subsp. xyli (strain CTCB07).